The chain runs to 183 residues: Bifunctional protein PyrR (183 aa).

The PRPP-binding signature appears at valine 100–threonine 112.

Belongs to the purine/pyrimidine phosphoribosyltransferase family. PyrR subfamily.

The catalysed reaction is UMP + diphosphate = 5-phospho-alpha-D-ribose 1-diphosphate + uracil. Its function is as follows. Regulates the transcription of the pyrimidine nucleotide (pyr) operon in response to exogenous pyrimidines. In terms of biological role, also displays a weak uracil phosphoribosyltransferase activity which is not physiologically significant. The sequence is that of Bifunctional protein PyrR from Deinococcus deserti (strain DSM 17065 / CIP 109153 / LMG 22923 / VCD115).